Reading from the N-terminus, the 159-residue chain is Protein-export protein SecB (159 aa).

Belongs to the SecB family. As to quaternary structure, homotetramer, a dimer of dimers. One homotetramer interacts with 1 SecA dimer.

It is found in the cytoplasm. Its function is as follows. One of the proteins required for the normal export of preproteins out of the cell cytoplasm. It is a molecular chaperone that binds to a subset of precursor proteins, maintaining them in a translocation-competent state. It also specifically binds to its receptor SecA. This chain is Protein-export protein SecB, found in Pseudomonas fluorescens (strain ATCC BAA-477 / NRRL B-23932 / Pf-5).